The chain runs to 383 residues: Phospho-N-acetylmuramoyl-pentapeptide-transferase (383 aa).

9 helical membrane passes run 26 to 46 (TAGA…GVIE), 73 to 93 (TMGG…WAEL), 98 to 118 (IILL…DDFL), 131 to 151 (IYKI…LYYF), 182 to 202 (IFLP…IPFA), 221 to 241 (GLAI…SYVS), 258 to 278 (AGEV…FLWF), 283 to 305 (AQVF…IALF), and 360 to 380 (QVVF…IATL).

The protein belongs to the glycosyltransferase 4 family. MraY subfamily. The cofactor is Mg(2+).

It localises to the cell inner membrane. It carries out the reaction UDP-N-acetyl-alpha-D-muramoyl-L-alanyl-gamma-D-glutamyl-meso-2,6-diaminopimeloyl-D-alanyl-D-alanine + di-trans,octa-cis-undecaprenyl phosphate = di-trans,octa-cis-undecaprenyl diphospho-N-acetyl-alpha-D-muramoyl-L-alanyl-D-glutamyl-meso-2,6-diaminopimeloyl-D-alanyl-D-alanine + UMP. The protein operates within cell wall biogenesis; peptidoglycan biosynthesis. Catalyzes the initial step of the lipid cycle reactions in the biosynthesis of the cell wall peptidoglycan: transfers peptidoglycan precursor phospho-MurNAc-pentapeptide from UDP-MurNAc-pentapeptide onto the lipid carrier undecaprenyl phosphate, yielding undecaprenyl-pyrophosphoryl-MurNAc-pentapeptide, known as lipid I. This chain is Phospho-N-acetylmuramoyl-pentapeptide-transferase, found in Brachyspira hyodysenteriae (strain ATCC 49526 / WA1).